Here is a 567-residue protein sequence, read N- to C-terminus: Probable transport protein (567 aa).

The span at 1–30 shows a compositional bias: basic and acidic residues; the sequence is MSDRVEVNERRSDSVSEKEPARDDARKDVT. Positions 1-38 are disordered; that stretch reads MSDRVEVNERRSDSVSEKEPARDDARKDVTDDQEDAPP. At 1–46 the chain is on the cytoplasmic side; sequence MSDRVEVNERRSDSVSEKEPARDDARKDVTDDQEDAPPFMTANNAR. The chain crosses the membrane as a helical span at residues 47–67; that stretch reads VMLVQAIGGSLNGYSIGFVGV. The Extracellular portion of the chain corresponds to 68–160; that stretch reads YSTLFGYSTN…PSGYSSSESG (93 aa). A helical membrane pass occupies residues 161–181; the sequence is IFAGSMIAGCLIGSVFAGPLA. Over 182-189 the chain is Cytoplasmic; it reads SKIGARLS. A helical transmembrane segment spans residues 190-210; the sequence is FLLVGLVGVVASVMYHASCAA. The Extracellular segment spans residues 211–212; sequence DE. A helical membrane pass occupies residues 213 to 233; sequence FWVLIVGRFVIGLFLGVICVA. The Cytoplasmic portion of the chain corresponds to 234 to 249; the sequence is CPVYTDQNAHPKWKRT. The chain crosses the membrane as a helical span at residues 250 to 270; that stretch reads IGVMFQVFTTLGIFVAALMGL. Residues 271–289 lie on the Extracellular side of the membrane; that stretch reads ALGQSIRFDHDGDQKVMAR. Residues 290–310 form a helical membrane-spanning segment; that stretch reads MQGLCVFSTLFSLLTVVLGIV. The Cytoplasmic segment spans residues 311 to 341; sequence TRESRAKFDGGEEGRAELNPSEYGYVEMIPR. A helical membrane pass occupies residues 342-362; that stretch reads LLMGCVMAGTLQLTGINAVMN. Residues 363–366 are Extracellular-facing; the sequence is YAPT. Residues 367–387 traverse the membrane as a helical segment; that stretch reads IMGSLGLAPLVGNFVVMLWNF. Residues 388–404 are Cytoplasmic-facing; that stretch reads VTTLASIPLSYVFTMRH. The chain crosses the membrane as a helical span at residues 405–425; sequence VFLFGSIFTSCMCLFMCGIPV. Topologically, residues 426–437 are extracellular; that stretch reads YPGVSKKLEAKN. The helical transmembrane segment at 438–458 threads the bilayer; the sequence is GVAITGILLFILGFEVCVGPC. Over 459–480 the chain is Cytoplasmic; that stretch reads YYVLTQDMFPPSFRPRGASFTQ. Residues 481 to 501 traverse the membrane as a helical segment; that stretch reads VAQFIFNLIINVCYPIATESI. Residues 502 to 514 are Extracellular-facing; that stretch reads SGGPSGNQDKGQA. Residues 515-535 form a helical membrane-spanning segment; it reads VAFIFFGGLGLICFVIQVFFL. Topologically, residues 536–567 are cytoplasmic; it reads HPWDEERDGKKVVAPAIGKKELSEESIGNRAE.

Belongs to the major facilitator superfamily. Sugar transporter (TC 2.A.1.1) family.

The protein resides in the membrane. Its function is as follows. Probable membrane transport protein. The chain is Probable transport protein (PRO-1) from Leishmania enriettii.